A 225-amino-acid polypeptide reads, in one-letter code: Thymidylate kinase (225 aa).

Residue 9–16 (GIEGCGKT) participates in ATP binding.

Belongs to the thymidylate kinase family.

It catalyses the reaction dTMP + ATP = dTDP + ADP. Functionally, phosphorylation of dTMP to form dTDP in both de novo and salvage pathways of dTTP synthesis. The chain is Thymidylate kinase from Geobacter sp. (strain M21).